The primary structure comprises 449 residues: Glucose-6-phosphate isomerase (449 aa).

Glutamate 291 serves as the catalytic Proton donor. Catalysis depends on residues histidine 312 and lysine 426.

It belongs to the GPI family.

The protein resides in the cytoplasm. It catalyses the reaction alpha-D-glucose 6-phosphate = beta-D-fructose 6-phosphate. It participates in carbohydrate biosynthesis; gluconeogenesis. The protein operates within carbohydrate degradation; glycolysis; D-glyceraldehyde 3-phosphate and glycerone phosphate from D-glucose: step 2/4. In terms of biological role, catalyzes the reversible isomerization of glucose-6-phosphate to fructose-6-phosphate. The sequence is that of Glucose-6-phosphate isomerase from Pediococcus pentosaceus (strain ATCC 25745 / CCUG 21536 / LMG 10740 / 183-1w).